The following is a 43-amino-acid chain: Putative inhibitor of glucose uptake transporter SgrT (43 aa).

Functionally, acts to promote recovery from glucose-phosphate stress due to intracellular accumulation of glucose-6-phosphate caused by disruption of glycolytic flux or in the presence of (toxic) non-metabolizable glucose phosphate analogs. It may do so by inhibiting the transporter activity for glucose uptake (PtsG) as cells that overexpress this protein do not seem to import glucose although they have nearly wild-type levels of PtsG. This is Putative inhibitor of glucose uptake transporter SgrT (sgrT) from Escherichia coli (strain K12).